Here is a 154-residue protein sequence, read N- to C-terminus: MFDILVYLFENYLHAAACPESEQLARKLSAAGFEEDEITEALDWLSGLRAIAVSPLAKVPQPDSIRLYAAEEQAKLDTSCRGFLAFLENAGALDPQTRELIIERTMAVDGFHVNLHRFKVIVLMVLWQQEQPLDSLILDELLTDEAEELAPVLQ.

It belongs to the Smg family.

The chain is Protein Smg homolog from Aromatoleum aromaticum (strain DSM 19018 / LMG 30748 / EbN1) (Azoarcus sp. (strain EbN1)).